The sequence spans 88 residues: MLTAQDKQKIIKENQLAESDTGSPEVQVALLTARINDLKGHFEAHKKDNHSRRGLLRLVSQRRKLLDYLHDKDVERYRSLIKKLNIRR.

This sequence belongs to the universal ribosomal protein uS15 family. In terms of assembly, part of the 30S ribosomal subunit. Forms a bridge to the 50S subunit in the 70S ribosome, contacting the 23S rRNA.

One of the primary rRNA binding proteins, it binds directly to 16S rRNA where it helps nucleate assembly of the platform of the 30S subunit by binding and bridging several RNA helices of the 16S rRNA. Functionally, forms an intersubunit bridge (bridge B4) with the 23S rRNA of the 50S subunit in the ribosome. The polypeptide is Small ribosomal subunit protein uS15 (Francisella tularensis subsp. holarctica (strain LVS)).